Here is a 752-residue protein sequence, read N- to C-terminus: Multifunctional tryptophan biosynthesis protein (752 aa).

The Glutamine amidotransferase type-1 domain occupies 3 to 202 (FTLLIDNYDS…IQMKGGKWGG (200 aa)). Residue 58–60 (GPG) coordinates L-glutamine. Residue C86 is the Nucleophile; for GATase activity of the active site. L-glutamine is bound at residue 136 to 137 (SL). Active-site for GATase activity residues include H176 and E178. Residues 231-495 (ILNKIHAQRL…DTKAFLRSLI (265 aa)) are indole-3-glycerol phosphate synthase. Residues 509-752 (LVKICGIRST…VEAFVKAVRG (244 aa)) are N-(5'-phosphoribosyl)anthranilate isomerase.

The catalysed reaction is N-(5-phospho-beta-D-ribosyl)anthranilate = 1-(2-carboxyphenylamino)-1-deoxy-D-ribulose 5-phosphate. It catalyses the reaction 1-(2-carboxyphenylamino)-1-deoxy-D-ribulose 5-phosphate + H(+) = (1S,2R)-1-C-(indol-3-yl)glycerol 3-phosphate + CO2 + H2O. It carries out the reaction chorismate + L-glutamine = anthranilate + pyruvate + L-glutamate + H(+). It participates in amino-acid biosynthesis; L-tryptophan biosynthesis; L-tryptophan from chorismate: step 1/5. Its pathway is amino-acid biosynthesis; L-tryptophan biosynthesis; L-tryptophan from chorismate: step 3/5. The protein operates within amino-acid biosynthesis; L-tryptophan biosynthesis; L-tryptophan from chorismate: step 4/5. Trifunctional enzyme bearing the Gln amidotransferase (GATase) domain of anthranilate synthase, indole-glycerolphosphate synthase, and phosphoribosylanthranilate isomerase activities. The sequence is that of Multifunctional tryptophan biosynthesis protein (TRP1) from Cryptococcus neoformans var. grubii serotype A (strain H99 / ATCC 208821 / CBS 10515 / FGSC 9487) (Filobasidiella neoformans var. grubii).